Reading from the N-terminus, the 344-residue chain is Melanocyte-stimulating hormone receptor (344 aa).

The Extracellular segment spans residues 1-37 (MPMQGAQRKLLGSLNSTPTATSNLGLAANHTGAPCLE). N29 carries N-linked (GlcNAc...) asparagine glycosylation. A helical membrane pass occupies residues 38–63 (VPIPDGLFLSLGLVSLVENVLVVAAI). At 64-72 (AKNRNLHSS) the chain is on the cytoplasmic side. The chain crosses the membrane as a helical span at residues 73 to 93 (MYCFICCLAVSDLLVSGSNML). Over 94–118 (ETAIILLLEAGALVTRASVVQQLHN) the chain is Extracellular. The chain crosses the membrane as a helical span at residues 119 to 140 (TIDVLTCSSMLCSLCFLGAIAV). Over 141-163 (DRYISIFYALRYHSIMTLPRAQR) the chain is Cytoplasmic. The chain crosses the membrane as a helical span at residues 164–183 (AIAAIWVASVLSSTLFITYY). At 184 to 191 (DHAAVLLC) the chain is on the extracellular side. The chain crosses the membrane as a helical span at residues 192 to 211 (LVVFFLAMLVLMAVLYVHML). Topologically, residues 212–240 (ARACQHAQGIIRLHKRQPPAHKGFGLRGA) are cytoplasmic. A helical membrane pass occupies residues 241–266 (ATLTILLGIFFLCWGPFFLHLTLVVF). Residues 267 to 279 (CPQHMTCSCIFKN) are Extracellular-facing. A helical membrane pass occupies residues 280–300 (FKVFLTLIICNTIIDPLIYAF). Residues 301 to 344 (RSQELRRTLKEVLLCSRWPGCWAEGGGDSVWPGSCVTLRGPLPP) lie on the Cytoplasmic side of the membrane. C315 carries S-palmitoyl cysteine lipidation.

This sequence belongs to the G-protein coupled receptor 1 family. As to quaternary structure, interacts with MGRN1, but does not undergo MGRN1-mediated ubiquitination; this interaction competes with GNAS-binding and thus inhibits agonist-induced cAMP production. Interacts with OPN3; the interaction results in a decrease in MC1R-mediated cAMP signaling and ultimately a decrease in melanin production in melanocytes.

It is found in the cell membrane. Receptor for MSH (alpha, beta and gamma) and ACTH. The activity of this receptor is mediated by G proteins which activate adenylate cyclase. Mediates melanogenesis, the production of eumelanin (black/brown) and phaeomelanin (red/yellow), via regulation of cAMP signaling in melanocytes. This Callimico goeldii (Goeldi's marmoset) protein is Melanocyte-stimulating hormone receptor (MC1R).